We begin with the raw amino-acid sequence, 182 residues long: Dihydrofolate reductase (182 aa).

The region spanning 3–180 is the DHFR domain; the sequence is RFNLIVAVCE…IKFEYKILEK (178 aa). Residues Ala9 and 15–21 contribute to the NADP(+) site; that span reads GIGIRGD. 29–34 is a substrate binding site; it reads ELKYFS. An NADP(+)-binding site is contributed by 53–55; the sequence is RKT. Residue Arg69 coordinates substrate. NADP(+) is bound by residues 75–77 and 113–120; these read STT and GGSGVYEE.

The protein belongs to the dihydrofolate reductase family. In terms of assembly, monomer. Interacts with vg.

It catalyses the reaction (6S)-5,6,7,8-tetrahydrofolate + NADP(+) = 7,8-dihydrofolate + NADPH + H(+). The protein operates within cofactor biosynthesis; tetrahydrofolate biosynthesis; 5,6,7,8-tetrahydrofolate from 7,8-dihydrofolate: step 1/1. In terms of biological role, by interacting with vestigial (vg), may control genes involved in DNA replication. Key enzyme in folate metabolism. Catalyzes an essential reaction for de novo glycine and purine synthesis, and for DNA precursor synthesis. The protein is Dihydrofolate reductase (Dhfr) of Drosophila melanogaster (Fruit fly).